The chain runs to 258 residues: Hydroxyethylthiazole kinase (258 aa).

Methionine 37 is a substrate binding site. ATP contacts are provided by arginine 112 and threonine 158. Alanine 185 contacts substrate.

Belongs to the Thz kinase family. Mg(2+) serves as cofactor.

It carries out the reaction 5-(2-hydroxyethyl)-4-methylthiazole + ATP = 4-methyl-5-(2-phosphooxyethyl)-thiazole + ADP + H(+). It participates in cofactor biosynthesis; thiamine diphosphate biosynthesis; 4-methyl-5-(2-phosphoethyl)-thiazole from 5-(2-hydroxyethyl)-4-methylthiazole: step 1/1. In terms of biological role, catalyzes the phosphorylation of the hydroxyl group of 4-methyl-5-beta-hydroxyethylthiazole (THZ). This Rhizobium etli (strain ATCC 51251 / DSM 11541 / JCM 21823 / NBRC 15573 / CFN 42) protein is Hydroxyethylthiazole kinase.